The following is a 154-amino-acid chain: uncharacterized protein (154 aa).

This is an uncharacterized protein from Aquifex aeolicus (strain VF5).